Reading from the N-terminus, the 276-residue chain is Exosome complex component RRP43 (276 aa).

Alanine 2 carries the N-acetylalanine modification.

This sequence belongs to the RNase PH family. Component of the RNA exosome core complex (Exo-9), composed of EXOSC1, EXOSC2, EXOSC3, EXOSC4, EXOSC5, EXOSC6, EXOSC7, EXOSC8 and EXOSC9; within the complex interacts with EXOSC5 and EXOSC6. The catalytically inactive RNA exosome core complex (Exo-9) associates with the catalytic subunit EXOSC10/RRP6. Exo-9 may associate with DIS3 to form the nucleolar exosome complex, or DIS3L to form the cytoplasmic exosome complex. Exo-9 is formed by a hexameric base ring consisting of the heterodimers EXOSC4-EXOSC9, EXOSC5-EXOSC8 and EXOSC6-EXOSC7, and a cap ring consisting of EXOSC1, EXOSC2 and EXOSC3. The RNA exosome complex associates with cofactors C1D/RRP47, MPHOSPH6/MPP6 and MTREX/MTR4.

It is found in the cytoplasm. The protein resides in the nucleus. The protein localises to the nucleolus. In terms of biological role, non-catalytic component of the RNA exosome complex which has 3'-&gt;5' exoribonuclease activity and participates in a multitude of cellular RNA processing and degradation events. In the nucleus, the RNA exosome complex is involved in proper maturation of stable RNA species such as rRNA, snRNA and snoRNA, in the elimination of RNA processing by-products and non-coding 'pervasive' transcripts, such as antisense RNA species and promoter-upstream transcripts (PROMPTs), and of mRNAs with processing defects, thereby limiting or excluding their export to the cytoplasm. The RNA exosome may be involved in Ig class switch recombination (CSR) and/or Ig variable region somatic hypermutation (SHM) by targeting AICDA deamination activity to transcribed dsDNA substrates. In the cytoplasm, the RNA exosome complex is involved in general mRNA turnover and specifically degrades inherently unstable mRNAs containing AU-rich elements (AREs) within their 3' untranslated regions, and in RNA surveillance pathways, preventing translation of aberrant mRNAs. It seems to be involved in degradation of histone mRNA. The catalytic inactive RNA exosome core complex of 9 subunits (Exo-9) is proposed to play a pivotal role in the binding and presentation of RNA for ribonucleolysis, and to serve as a scaffold for the association with catalytic subunits and accessory proteins or complexes. EXOSC8 binds to ARE-containing RNAs. This is Exosome complex component RRP43 (Exosc8) from Mus musculus (Mouse).